We begin with the raw amino-acid sequence, 76 residues long: ADVPGNYPLNTYGNMYYCTILGENEFCKKICKVHGVSYGYCYNSYCWCEYLEGKDINIWDAVKNHCTNTNLYPNGK.

The region spanning 3-67 (VPGNYPLNTY…IWDAVKNHCT (65 aa)) is the LCN-type CS-alpha/beta domain. 3 disulfide bridges follow: cysteine 18/cysteine 41, cysteine 27/cysteine 46, and cysteine 31/cysteine 48.

Belongs to the long (3 C-C) scorpion toxin superfamily. Sodium channel inhibitor family. Beta subfamily. Expressed by the venom gland.

Its subcellular location is the secreted. Its function is as follows. Binds to sodium channels (Nav) and affects the channel activation process. The protein is Toxin Acra III-2 of Androctonus crassicauda (Arabian fat-tailed scorpion).